The primary structure comprises 899 residues: Protein translocase subunit SecA (899 aa).

ATP contacts are provided by residues Gln87, 105 to 109 (GEGKT), and Asp516. Cys884, Cys886, Cys895, and His896 together coordinate Zn(2+).

This sequence belongs to the SecA family. In terms of assembly, monomer and homodimer. Part of the essential Sec protein translocation apparatus which comprises SecA, SecYEG and auxiliary proteins SecDF. Other proteins may also be involved. Requires Zn(2+) as cofactor.

The protein resides in the cell inner membrane. It localises to the cytoplasm. It catalyses the reaction ATP + H2O + cellular proteinSide 1 = ADP + phosphate + cellular proteinSide 2.. Functionally, part of the Sec protein translocase complex. Interacts with the SecYEG preprotein conducting channel. Has a central role in coupling the hydrolysis of ATP to the transfer of proteins into and across the cell membrane, serving as an ATP-driven molecular motor driving the stepwise translocation of polypeptide chains across the membrane. This is Protein translocase subunit SecA from Borreliella afzelii (strain PKo) (Borrelia afzelii).